Here is a 355-residue protein sequence, read N- to C-terminus: 3,4-dihydroxy-2-butanone 4-phosphate synthase (355 aa).

Positions 1 to 202 (MYHKRIKEAI…VSDIIQYRLN (202 aa)) are DHBP synthase. D-ribulose 5-phosphate-binding positions include 27 to 28 (RE), aspartate 32, 139 to 143 (RTGHT), and glutamate 163. Glutamate 28 contacts Mg(2+). A Mg(2+)-binding site is contributed by histidine 142. Residues 203-355 (FENLLREITR…NLHLVEKIEV (153 aa)) form a GTP cyclohydrolase II-like region.

This sequence in the N-terminal section; belongs to the DHBP synthase family. In the C-terminal section; belongs to the GTP cyclohydrolase II family. Mg(2+) is required as a cofactor. It depends on Mn(2+) as a cofactor.

The catalysed reaction is D-ribulose 5-phosphate = (2S)-2-hydroxy-3-oxobutyl phosphate + formate + H(+). It functions in the pathway cofactor biosynthesis; riboflavin biosynthesis; 2-hydroxy-3-oxobutyl phosphate from D-ribulose 5-phosphate: step 1/1. Its function is as follows. Catalyzes the conversion of D-ribulose 5-phosphate to formate and 3,4-dihydroxy-2-butanone 4-phosphate. This is 3,4-dihydroxy-2-butanone 4-phosphate synthase (ribB) from Helicobacter hepaticus (strain ATCC 51449 / 3B1).